The chain runs to 102 residues: Large ribosomal subunit protein bL21 (102 aa).

Belongs to the bacterial ribosomal protein bL21 family. As to quaternary structure, part of the 50S ribosomal subunit. Contacts protein L20.

Its function is as follows. This protein binds to 23S rRNA in the presence of protein L20. The chain is Large ribosomal subunit protein bL21 from Citrifermentans bemidjiense (strain ATCC BAA-1014 / DSM 16622 / JCM 12645 / Bem) (Geobacter bemidjiensis).